Here is a 619-residue protein sequence, read N- to C-terminus: MSRMVDTMGDLLTARRHFDRAMTIKNGQGCVAALPEFVAATEADPSMADAWLGRIACGDRDLASLKQLNAHSEWLHRETTRIGRTLAAEVQLGPSIGITVTDASQVGLALSSALTIAGEYAKADALLANRELLDSWRNYQWHQLARAFLMYVTQRWPDVLSTAAEDLPPQAIVMPAVTASICALAAHAAAHLGQGRVALDWLDRVDVIGHSRSSGRFGADVLTAAIGPADIPLLVADLAYVRGMVYRQLHEEDKAQIWLSKATINGVLTDAAKEALADPNLRLIVTDERTIASRSDRWDASTAKSRDQLDDDNAAQRRGELLAEGRELLAKQVGLAAVKQAVSALEDQLEVRMMRLEHGLPVEGQTNHMLLVGPPGTGKTTTAEALGKIYAGMGIVRHPEIREVRRSDFCGHYIGESGPKTNELIEKSLGRIIFMDEFYSLIERHQDGTPDMIGMEAVNQLLVQLETHRFDFCFIGAGYEDQVDEFLTVNPGLAGRFNRKLRFESYSPVEIVEIGHRYATPRASQLDDAAREVFLDAVTTIRNYTTPSGQHGIDAMQNGRFARNVIERAEGFRDTRVVAQKRAGQPVSVQDLQIITATDIDAAIRSVCSDNRDMAAIVW.

373–380 (GPPGTGKT) contributes to the ATP binding site.

This sequence belongs to the CbxX/CfxQ family. As to quaternary structure, part of the ESX-2 / type VII secretion system (T7SS), which is composed of cytosolic and membrane components.

The protein resides in the cytoplasm. Its function is as follows. Part of an ESX-2 / type VII specialized secretion system (T7SS), which exports several proteins. May have ATPase activity and might provide energy for the export of ESX-2 substrates. The sequence is that of ESX-2 secretion system protein EccA2 from Mycobacterium bovis (strain ATCC BAA-935 / AF2122/97).